The sequence spans 366 residues: DNA replication and repair protein RecF (366 aa).

30 to 37 serves as a coordination point for ATP; the sequence is GRNAQGKT.

It belongs to the RecF family.

It localises to the cytoplasm. In terms of biological role, the RecF protein is involved in DNA metabolism; it is required for DNA replication and normal SOS inducibility. RecF binds preferentially to single-stranded, linear DNA. It also seems to bind ATP. The protein is DNA replication and repair protein RecF of Streptococcus thermophilus (strain ATCC BAA-250 / LMG 18311).